The chain runs to 95 residues: Aspartyl/glutamyl-tRNA(Asn/Gln) amidotransferase subunit C (95 aa).

Belongs to the GatC family. As to quaternary structure, heterotrimer of A, B and C subunits.

It catalyses the reaction L-glutamyl-tRNA(Gln) + L-glutamine + ATP + H2O = L-glutaminyl-tRNA(Gln) + L-glutamate + ADP + phosphate + H(+). It carries out the reaction L-aspartyl-tRNA(Asn) + L-glutamine + ATP + H2O = L-asparaginyl-tRNA(Asn) + L-glutamate + ADP + phosphate + 2 H(+). Allows the formation of correctly charged Asn-tRNA(Asn) or Gln-tRNA(Gln) through the transamidation of misacylated Asp-tRNA(Asn) or Glu-tRNA(Gln) in organisms which lack either or both of asparaginyl-tRNA or glutaminyl-tRNA synthetases. The reaction takes place in the presence of glutamine and ATP through an activated phospho-Asp-tRNA(Asn) or phospho-Glu-tRNA(Gln). The sequence is that of Aspartyl/glutamyl-tRNA(Asn/Gln) amidotransferase subunit C from Alcanivorax borkumensis (strain ATCC 700651 / DSM 11573 / NCIMB 13689 / SK2).